The following is a 206-amino-acid chain: MTLEWWFAYLLTSIILSLSPGSGAINTMTTSLNHGYRGAVASIAGLQTGLAIHIVLVGVGLGTLFSRSVIAFEVLKWAGAAYLIWLGIQQWRAAGAIDLKSLASTQSRRHLFQRAVFVNLTNPKSIVFLAALFPQFIMPQQPQLMQYIVLGVTTIVVDIIVMIGYATLAQRIALWIKGPKQMKALNKIFGSLFMLVGALLASARHA.

6 helical membrane passes run 5 to 25 (WWFAYLLTSIILSLSPGSGAI), 45 to 65 (GLQTGLAIHIVLVGVGLGTLF), 68 to 88 (SVIAFEVLKWAGAAYLIWLGI), 117 to 137 (FVNLTNPKSIVFLAALFPQFI), 148 to 168 (IVLGVTTIVVDIIVMIGYATL), and 182 to 202 (MKALNKIFGSLFMLVGALLAS).

Belongs to the Rht family.

The protein localises to the cell membrane. Functionally, conducts the efflux of homoserine and homoserine lactone. The polypeptide is Homoserine/homoserine lactone efflux protein (rhtB) (Escherichia coli O157:H7).